A 78-amino-acid chain; its full sequence is Sec-independent protein translocase protein TatA (78 aa).

The chain crosses the membrane as a helical span at residues 1–21; that stretch reads MGMPSMPELLIILLIVVLLFG. The interval 46–78 is disordered; it reads DEEEVATENKKEIEEKTTASTTKTTADQDTTKA. Residues 52–62 are compositionally biased toward basic and acidic residues; it reads TENKKEIEEKT. The segment covering 63 to 78 has biased composition (low complexity); the sequence is TASTTKTTADQDTTKA.

The protein belongs to the TatA/E family. The Tat system comprises two distinct complexes: a TatABC complex, containing multiple copies of TatA, TatB and TatC subunits, and a separate TatA complex, containing only TatA subunits. Substrates initially bind to the TatABC complex, which probably triggers association of the separate TatA complex to form the active translocon.

It localises to the cell inner membrane. In terms of biological role, part of the twin-arginine translocation (Tat) system that transports large folded proteins containing a characteristic twin-arginine motif in their signal peptide across membranes. TatA could form the protein-conducting channel of the Tat system. The chain is Sec-independent protein translocase protein TatA from Nitratiruptor sp. (strain SB155-2).